A 112-amino-acid chain; its full sequence is uncharacterized protein (112 aa).

A mitochondrion-targeting transit peptide spans Met-1–Leu-21.

It localises to the mitochondrion. This is an uncharacterized protein from Saccharomyces cerevisiae (strain ATCC 204508 / S288c) (Baker's yeast).